Consider the following 441-residue polypeptide: Dolichyl-diphosphooligosaccharide--protein glycosyltransferase 48 kDa subunit (441 aa).

Residues 1–28 form the signal peptide; the sequence is MATALSGGFSKNALFILSAALMLQAVLG. The Lumenal segment spans residues 29–410; the sequence is DGKTLVLLDN…TQYERFIPSA (382 aa). Residues 411-431 traverse the membrane as a helical segment; the sequence is FPYYASAFSMMAGLFVFSVVF. Over 432–441 the chain is Cytoplasmic; it reads LHMREKEKSD.

The protein belongs to the DDOST 48 kDa subunit family. As to quaternary structure, component of the oligosaccharyltransferase (OST) complex.

The protein localises to the endoplasmic reticulum membrane. Its pathway is protein modification; protein glycosylation. Functionally, subunit of the oligosaccharyl transferase (OST) complex that catalyzes the initial transfer of a defined glycan (Glc(3)Man(9)GlcNAc(2) in eukaryotes) from the lipid carrier dolichol-pyrophosphate to an asparagine residue within an Asn-X-Ser/Thr consensus motif in nascent polypeptide chains, the first step in protein N-glycosylation. N-glycosylation occurs cotranslationally and the complex associates with the Sec61 complex at the channel-forming translocon complex that mediates protein translocation across the endoplasmic reticulum (ER). All subunits are required for a maximal enzyme activity. Required for the assembly of both SST3A- and SS3B-containing OST complexes. The chain is Dolichyl-diphosphooligosaccharide--protein glycosyltransferase 48 kDa subunit from Danio rerio (Zebrafish).